We begin with the raw amino-acid sequence, 576 residues long: Ecdysone receptor (576 aa).

The interval 1–162 (MSLGARGYRR…GPAPRQQEEL (162 aa)) is modulating. Positions 87–154 (CTMEQQQPQP…GEARRQKKGP (68 aa)) are disordered. Residues 91-106 (QQQPQPQQQPQQTQPL) are compositionally biased toward low complexity. The segment covering 107–117 (PSMPLPMPPTT) has biased composition (pro residues). NR C4-type zinc fingers lie at residues 163–183 (CLVC…CEGC) and 199–223 (CKFG…LKKC). Residues 163–235 (CLVCGDRASG…VGMRPECVVP (73 aa)) constitute a DNA-binding region (nuclear receptor). Positions 245–269 (EKKAQREKDKLPVSTTTVDDHMPPI) are disordered. The NR LBD domain maps to 314–548 (NQKSLIARLV…FLEEIWDVAD (235 aa)).

Belongs to the nuclear hormone receptor family. NR1 subfamily.

It is found in the nucleus. In terms of biological role, receptor for ecdysone. Binds to ecdysone response elements (ECRES). The chain is Ecdysone receptor (EcR) from Heliothis virescens (Tobacco budworm moth).